The following is a 251-amino-acid chain: Aquaporin TIP1-1 (251 aa).

M1 is subject to N-acetylmethionine. Over 1–23 (MPIRNIAIGRPDEATRPDALKAA) the chain is Cytoplasmic. Residues 24–44 (LAEFISTLIFVVAGSGSGMAF) form a helical membrane-spanning segment. The Vacuolar segment spans residues 45-56 (NKLTENGATTPS). Residues 57 to 77 (GLVAAAVAHAFGLFVAVSVGA) traverse the membrane as a helical segment. The Cytoplasmic portion of the chain corresponds to 78–103 (NISGGHVNPAVTFGAFIGGNITLLRG). An NPA 1 motif is present at residues 85–87 (NPA). A helical membrane pass occupies residues 104-124 (ILYWIAQLLGSVVACLILKFA). Topologically, residues 125–143 (TGGLAVPAFGLSAGVGVLN) are vacuolar. Residues 144–164 (AFVFEIVMTFGLVYTVYATAI) form a helical membrane-spanning segment. Over 165-172 (DPKNGSLG) the chain is Cytoplasmic. A helical membrane pass occupies residues 173–193 (TIAPIAIGFIVGANILAGGAF). Residues 194-218 (SGASMNPAVAFGPAVVSWTWTNHWV) lie on the Vacuolar side of the membrane. The short motif at 199-201 (NPA) is the NPA 2 element. A helical transmembrane segment spans residues 219 to 239 (YWAGPLVGGGIAGLIYEVFFI). The Cytoplasmic portion of the chain corresponds to 240 to 251 (NTTHEQLPTTDY).

Belongs to the MIP/aquaporin (TC 1.A.8) family. TIP (TC 1.A.8.10) subfamily. Interacts with cucumber mosaic virus (CMV) Protein 1a. In terms of tissue distribution, in all the vegetative organs, but not in seeds. Preferentially expressed in roots.

The protein resides in the vacuole membrane. Water channel required to facilitate the transport of water, diffusion of amino acids and/or peptides from the vacuolar compartment to the cytoplasm. Does not promote glycerol permeability. May play a role in the control of cell turgor and cell expansion. Its function is impaired by Hg(2+). May be involved in a vesicle-based metabolite routing through or between pre-vacuolar compartments and the central vacuole. Transports urea in yeast cells in a pH-independent manner. Transports H(2)O(2) in yeast cells. In Arabidopsis thaliana (Mouse-ear cress), this protein is Aquaporin TIP1-1 (TIP1-1).